A 107-amino-acid chain; its full sequence is MMKVLVVVALLVTLISYSSSEGIDDLEADELLSLMANEHPRKECIPKHHECTSNKHGCCRGNFFKYKCQCTTVVAQDGEQTERCFCGTPPHHKAAELVVGFGKKIFG.

An N-terminal signal peptide occupies residues 1-20; the sequence is MMKVLVVVALLVTLISYSSS. Residues 21 to 41 constitute a propeptide that is removed on maturation; the sequence is EGIDDLEADELLSLMANEHPR. 4 cysteine pairs are disulfide-bonded: Cys-44–Cys-59, Cys-51–Cys-68, Cys-58–Cys-86, and Cys-70–Cys-84.

This sequence belongs to the neurotoxin 19 (CSTX) family. 04 (U1-Lctx) subfamily. As to expression, expressed by the venom gland.

The protein resides in the secreted. This is U1-lycotoxin-Ls1x from Lycosa singoriensis (Wolf spider).